The chain runs to 420 residues: Glucose-1-phosphate adenylyltransferase (420 aa).

Residues Tyr-107, Gly-172, 187-188 (EK), and Ser-205 contribute to the alpha-D-glucose 1-phosphate site.

The protein belongs to the bacterial/plant glucose-1-phosphate adenylyltransferase family. As to quaternary structure, homotetramer.

The catalysed reaction is alpha-D-glucose 1-phosphate + ATP + H(+) = ADP-alpha-D-glucose + diphosphate. Its pathway is glycan biosynthesis; glycogen biosynthesis. In terms of biological role, involved in the biosynthesis of ADP-glucose, a building block required for the elongation reactions to produce glycogen. Catalyzes the reaction between ATP and alpha-D-glucose 1-phosphate (G1P) to produce pyrophosphate and ADP-Glc. This is Glucose-1-phosphate adenylyltransferase from Rhizobium etli (strain CIAT 652).